The chain runs to 304 residues: Uricase (304 aa).

The residue at position 2 (alanine 2) is an N-acetylalanine. N6-acetyllysine; alternate is present on residues lysine 10 and lysine 23. An N6-succinyllysine; alternate mark is found at lysine 10 and lysine 23. The active-site Charge relay system is lysine 23. 2 positions are modified to N6-acetyllysine: lysine 27 and lysine 36. 2 positions are modified to phosphoserine: serine 39 and serine 63. Threonine 68 acts as the Charge relay system in catalysis. Residues threonine 68 and aspartate 69 each coordinate urate. Residues lysine 118, lysine 122, and lysine 164 each carry the N6-acetyllysine modification. Position 170 (phenylalanine 170) interacts with urate. Lysine 175 and lysine 185 each carry N6-acetyllysine. Arginine 187 is a binding site for urate. Lysine 221 and lysine 228 each carry N6-acetyllysine; alternate. N6-succinyllysine; alternate occurs at positions 221 and 228. Serine 232 carries the post-translational modification Phosphoserine. Residues valine 235, glutamine 236, and asparagine 262 each contribute to the urate site. Histidine 264 serves as the catalytic Charge relay system. At lysine 278 the chain carries N6-acetyllysine. At tyrosine 289 the chain carries Phosphotyrosine. The short motif at 302-304 (SRL) is the Microbody targeting signal element.

The protein belongs to the uricase family. As to quaternary structure, homotetramer.

The protein localises to the peroxisome. It catalyses the reaction urate + O2 + H2O = 5-hydroxyisourate + H2O2. Its pathway is purine metabolism; urate degradation; (S)-allantoin from urate: step 1/3. In terms of biological role, catalyzes the oxidation of uric acid to 5-hydroxyisourate, which is further processed to form (S)-allantoin. In Bos taurus (Bovine), this protein is Uricase (UOX).